A 232-amino-acid polypeptide reads, in one-letter code: Flagellar L-ring protein (232 aa).

The first 21 residues, 1–21, serve as a signal peptide directing secretion; sequence MQKNAAHTYAISSLLVLSLTG. Cys-22 is lipidated: N-palmitoyl cysteine. A lipid anchor (S-diacylglycerol cysteine) is attached at Cys-22.

The protein belongs to the FlgH family. As to quaternary structure, the basal body constitutes a major portion of the flagellar organelle and consists of four rings (L,P,S, and M) mounted on a central rod.

The protein localises to the cell outer membrane. The protein resides in the bacterial flagellum basal body. Functionally, assembles around the rod to form the L-ring and probably protects the motor/basal body from shearing forces during rotation. In Shigella boydii serotype 18 (strain CDC 3083-94 / BS512), this protein is Flagellar L-ring protein.